The chain runs to 1193 residues: DNA-directed RNA polymerase subunit beta (1193 aa).

Acidic residues predominate over residues 1152–1161; the sequence is IEMRDLEDDE. The interval 1152 to 1193 is disordered; sequence IEMRDLEDDEETKKADGLALSNDEDAADLAPVDLERDAVTKE. Over residues 1184 to 1193 the composition is skewed to basic and acidic residues; the sequence is DLERDAVTKE.

The protein belongs to the RNA polymerase beta chain family. In terms of assembly, the RNAP catalytic core consists of 2 alpha, 1 beta, 1 beta' and 1 omega subunit. When a sigma factor is associated with the core the holoenzyme is formed, which can initiate transcription.

It catalyses the reaction RNA(n) + a ribonucleoside 5'-triphosphate = RNA(n+1) + diphosphate. In terms of biological role, DNA-dependent RNA polymerase catalyzes the transcription of DNA into RNA using the four ribonucleoside triphosphates as substrates. The polypeptide is DNA-directed RNA polymerase subunit beta (Bacillus pumilus (strain SAFR-032)).